Reading from the N-terminus, the 182-residue chain is Keratin, ultra high-sulfur matrix protein (182 aa).

Belongs to the KRTAP type 5 family. Cuticle layers of differentiating wool follicles.

In terms of biological role, the keratin products of mammalian epidermal derivatives such as wool and hair consist of microfibrils embedded in a rigid matrix of other proteins. The matrix proteins include the high-sulfur and high-tyrosine keratins, having molecular weights of 6-20 kDa, whereas the microfibrils contain the larger, low-sulfur keratins (40-56 kDa). In Ovis aries (Sheep), this protein is Keratin, ultra high-sulfur matrix protein.